Reading from the N-terminus, the 942-residue chain is DNA mismatch repair protein MutS (942 aa).

613 to 620 (GPNMAGKS) lines the ATP pocket.

It belongs to the DNA mismatch repair MutS family.

In terms of biological role, this protein is involved in the repair of mismatches in DNA. It is possible that it carries out the mismatch recognition step. This protein has a weak ATPase activity. In Clostridium botulinum (strain Eklund 17B / Type B), this protein is DNA mismatch repair protein MutS.